Consider the following 333-residue polypeptide: NADH-quinone oxidoreductase subunit H (333 aa).

A run of 8 helical transmembrane segments spans residues 15-35 (FFIF…FVTY), 88-108 (FILA…VIPF), 117-137 (IGVG…GVVT), 159-179 (ISYE…AGSL), 191-211 (VWYI…AVAE), 239-259 (WAFF…LITV), 274-296 (IPGA…WFRV), and 313-333 (VLLP…ELFF).

The protein belongs to the complex I subunit 1 family. In terms of assembly, NDH-1 is composed of 14 different subunits. Subunits NuoA, H, J, K, L, M, N constitute the membrane sector of the complex.

The protein localises to the cell membrane. It catalyses the reaction a quinone + NADH + 5 H(+)(in) = a quinol + NAD(+) + 4 H(+)(out). Functionally, NDH-1 shuttles electrons from NADH, via FMN and iron-sulfur (Fe-S) centers, to quinones in the respiratory chain. The immediate electron acceptor for the enzyme in this species is believed to be ubiquinone. Couples the redox reaction to proton translocation (for every two electrons transferred, four hydrogen ions are translocated across the cytoplasmic membrane), and thus conserves the redox energy in a proton gradient. This subunit may bind ubiquinone. The polypeptide is NADH-quinone oxidoreductase subunit H (Bacillus cereus (strain G9842)).